Consider the following 272-residue polypeptide: Dioscorin DB3L (272 aa).

An N-terminal signal peptide occupies residues 1 to 25; that stretch reads MSSSTLFHLFLLSSLLFSCLSNARP. The Alpha-carbonic anhydrase domain maps to 28 to 263; it reads DDFSYIEGSP…LKFRTIFFYP (236 aa). Cysteines 53 and 213 form a disulfide.

This sequence belongs to the alpha-class carbonic anhydrase family. As to quaternary structure, homodimer; disulfide-linked. In terms of processing, not glycosylated. In terms of tissue distribution, expressed in tuber (at protein level).

With respect to regulation, loss of hemagglutinating activity by EDTA treatment. The activity is fully recovered by the addition of 5 mM Ca(2+) ions, but not with Mg(2+) and Mn 2(+). Hemagglutination activity is inhibited by maltose and its derivatives, with maltopentaose and maltohexaose being the best inhibitors followed by maltose and iso maltose. Not inhibited by glycoproteins. Its function is as follows. Maltose-binding lectin. No affinity is detected toward glucose. Has hemagglutinating activity against rabbit erythrocytes at 3.9 ug/ml. No carbonate dehydratase or trypsin inhibitor activity detected by measuring the hydrolysis of 4-nitrophenyl acetate or the inhibition of bovine trypsin-catalyzed hydrolysis of N-benzoyl-L-arginine ethyl ester, respectively. The sequence is that of Dioscorin DB3L from Dioscorea polystachya (Chinese yam).